The sequence spans 807 residues: F-box protein YLR352W (807 aa).

The F-box domain maps to 220-266; it reads LNDCIDLPSHVLWKILKMLPELQKLDLSHTSIDDSTLYHGIPHWKNL. The segment covering 607–616 has biased composition (basic and acidic residues); sequence DNNSHVEDSQ. 2 disordered regions span residues 607–647 and 716–739; these read DNNS…NPFA and HLFE…EHSS. Composition is skewed to polar residues over residues 627-644 and 723-736; these read SLLS…SSAN and SRSG…LTGE.

In terms of assembly, interacts with SKP1 and CDC53. Component of the probable SCF(YBR352W) complex containing CDC53, SKP1, RBX1 and YBR352W.

It functions in the pathway protein modification; protein ubiquitination. Substrate recognition component of a SCF (SKP1-CUL1-F-box protein) E3 ubiquitin-protein ligase complex which mediates the ubiquitination and subsequent proteasomal degradation of target proteins. Probably recognizes and binds to phosphorylated target proteins. The polypeptide is F-box protein YLR352W (Saccharomyces cerevisiae (strain ATCC 204508 / S288c) (Baker's yeast)).